Here is a 518-residue protein sequence, read N- to C-terminus: GRIN2-like protein (518 aa).

Disordered regions lie at residues M1–T23 and Q467–M500. Basic and acidic residues predominate over residues K476–K494.

As to quaternary structure, may interact with GNAO1.

Its function is as follows. May be involved in neurite outgrowth. This chain is GRIN2-like protein, found in Gallus gallus (Chicken).